The primary structure comprises 183 residues: Glutathione-regulated potassium-efflux system ancillary protein KefG (183 aa).

The protein belongs to the NAD(P)H dehydrogenase (quinone) family. KefG subfamily. In terms of assembly, interacts with KefB.

Its subcellular location is the cell inner membrane. It catalyses the reaction a quinone + NADH + H(+) = a quinol + NAD(+). It carries out the reaction a quinone + NADPH + H(+) = a quinol + NADP(+). Functionally, regulatory subunit of a potassium efflux system that confers protection against electrophiles. Required for full activity of KefB. The chain is Glutathione-regulated potassium-efflux system ancillary protein KefG from Salmonella gallinarum (strain 287/91 / NCTC 13346).